The primary structure comprises 245 residues: GATA zinc finger domain-containing protein 1 (245 aa).

Residues 9 to 33 (CSMCKTNTSSMWKKGSQGEILCNNC) form a GATA-type zinc finger. Low complexity predominate over residues 39-70 (TAAGGNNNNNSSSSTSGSSSYTGTTFASTSTS). A disordered region spans residues 39–110 (TAAGGNNNNN…PAAEKKVSTK (72 aa)). The span at 71 to 80 (QQSNGGNTKQ) shows a compositional bias: polar residues.

Its subcellular location is the nucleus. Functionally, component of some chromatin complex recruited to chromatin sites methylated 'Lys-4' of histone H3 (H3K4me), with a preference for trimethylated form (H3K4me3). This chain is GATA zinc finger domain-containing protein 1 (gatad1), found in Xenopus laevis (African clawed frog).